A 160-amino-acid polypeptide reads, in one-letter code: Nascent polypeptide-associated complex subunit alpha (160 aa).

Positions 10-75 (TKGEKKTREA…HSFDDIASRL (66 aa)) constitute an NAC-A/B domain. The region spanning 120–159 (VNPKDVEVVMKETKASREKVVETLIATKNDLVSAVLELTT) is the UBA domain.

The protein belongs to the NAC-alpha family. In terms of assembly, part of the nascent polypeptide-associated complex (NAC), consisting of nacA and nacB.

Its subcellular location is the cytoplasm. The protein localises to the nucleus. Its function is as follows. Component of the nascent polypeptide-associated complex (NAC), a dynamic component of the ribosomal exit tunnel, protecting the emerging polypeptides from interaction with other cytoplasmic proteins to ensure appropriate nascent protein targeting. The NAC complex also promotes mitochondrial protein import by enhancing productive ribosome interactions with the outer mitochondrial membrane and blocks the inappropriate interaction of ribosomes translating non-secretory nascent polypeptides with translocation sites in the membrane of the endoplasmic reticulum. May also be involved in transcription regulation. In Dictyostelium discoideum (Social amoeba), this protein is Nascent polypeptide-associated complex subunit alpha (nacA).